A 428-amino-acid chain; its full sequence is Succinyl-CoA--L-malate CoA-transferase alpha subunit (428 aa).

Residues 1 to 31 (MPPTGEEPSGHAESKPPASDPMSTPGTGQEQ) are disordered. The span at 21–31 (PMSTPGTGQEQ) shows a compositional bias: polar residues. Aspartate 200 serves as the catalytic Nucleophile.

It belongs to the CoA-transferase III family. As to quaternary structure, forms a large complex composed of six heterodimers (alpha, beta).

It catalyses the reaction succinyl-CoA + (S)-malate = (S)-malyl-CoA + succinate. It carries out the reaction (3S)-citramalate + succinyl-CoA = (3S)-citramalyl-CoA + succinate. Functionally, involved in the 3-hydroxypropionate cycle used for autotrophic carbon dioxide fixation. Catalyzes the transfer of CoA moiety from succinyl-CoA to L-malate to yield L-malyl-CoA. It is highly specific for succinyl-CoA as the CoA donor, however it can accept L-citramalate instead of L-malate as the CoA acceptor. The polypeptide is Succinyl-CoA--L-malate CoA-transferase alpha subunit (smtA) (Chloroflexus aurantiacus).